The chain runs to 1004 residues: Glycine dehydrogenase (decarboxylating), mitochondrial (1004 aa).

K738 is modified (N6-(pyridoxal phosphate)lysine).

Belongs to the GcvP family. Homodimer. Interacts with GCSH. The glycine cleavage system is composed of four proteins: P (GLDC), T (GCST), L (DLD) and H (GCSH). Pyridoxal 5'-phosphate serves as cofactor. In terms of tissue distribution, liver (at protein level).

Its subcellular location is the mitochondrion. The enzyme catalyses N(6)-[(R)-lipoyl]-L-lysyl-[glycine-cleavage complex H protein] + glycine + H(+) = N(6)-[(R)-S(8)-aminomethyldihydrolipoyl]-L-lysyl-[glycine-cleavage complex H protein] + CO2. Stimulated by lipoic acid. Inhibited in presence of methylamine. In terms of biological role, the glycine cleavage system catalyzes the degradation of glycine. The P protein (GLDC) binds the alpha-amino group of glycine through its pyridoxal phosphate cofactor; CO(2) is released and the remaining methylamine moiety is then transferred to the lipoamide cofactor of the H protein (GCSH). The sequence is that of Glycine dehydrogenase (decarboxylating), mitochondrial from Gallus gallus (Chicken).